Consider the following 181-residue polypeptide: ATP synthase subunit delta (181 aa).

This sequence belongs to the ATPase delta chain family. As to quaternary structure, F-type ATPases have 2 components, F(1) - the catalytic core - and F(0) - the membrane proton channel. F(1) has five subunits: alpha(3), beta(3), gamma(1), delta(1), epsilon(1). F(0) has three main subunits: a(1), b(2) and c(10-14). The alpha and beta chains form an alternating ring which encloses part of the gamma chain. F(1) is attached to F(0) by a central stalk formed by the gamma and epsilon chains, while a peripheral stalk is formed by the delta and b chains.

The protein localises to the cell inner membrane. In terms of biological role, f(1)F(0) ATP synthase produces ATP from ADP in the presence of a proton or sodium gradient. F-type ATPases consist of two structural domains, F(1) containing the extramembraneous catalytic core and F(0) containing the membrane proton channel, linked together by a central stalk and a peripheral stalk. During catalysis, ATP synthesis in the catalytic domain of F(1) is coupled via a rotary mechanism of the central stalk subunits to proton translocation. Its function is as follows. This protein is part of the stalk that links CF(0) to CF(1). It either transmits conformational changes from CF(0) to CF(1) or is implicated in proton conduction. The chain is ATP synthase subunit delta from Chlorobaculum tepidum (strain ATCC 49652 / DSM 12025 / NBRC 103806 / TLS) (Chlorobium tepidum).